Here is a 68-residue protein sequence, read N- to C-terminus: Antimicrobial peptide VpCT3 (68 aa).

The first 23 residues, Met-1 to Ala-23, serve as a signal peptide directing secretion. Leu-36 carries the post-translational modification Leucine amide. Residues Gly-37–Arg-68 constitute a propeptide that is removed on maturation.

It belongs to the non-disulfide-bridged peptide (NDBP) superfamily. Short antimicrobial peptide (group 4) family. In terms of tissue distribution, expressed by the venom gland.

It is found in the secreted. It localises to the target cell membrane. In terms of biological role, antimicrobial peptide with weak activity against all bacteria tested (MIC&gt;100 uM) and all yeasts tested (MIC&gt;200 uM). Also provokes weak hemolysis on human erythrocytes (HC(50)=83.7 uM). The sequence is that of Antimicrobial peptide VpCT3 from Mesomexovis punctatus (Scorpion).